The primary structure comprises 203 residues: Large ribosomal subunit protein bL25 (203 aa).

The protein belongs to the bacterial ribosomal protein bL25 family. CTC subfamily. In terms of assembly, part of the 50S ribosomal subunit; part of the 5S rRNA/L5/L18/L25 subcomplex. Contacts the 5S rRNA. Binds to the 5S rRNA independently of L5 and L18.

In terms of biological role, this is one of the proteins that binds to the 5S RNA in the ribosome where it forms part of the central protuberance. This is Large ribosomal subunit protein bL25 from Wolbachia pipientis subsp. Culex pipiens (strain wPip).